Here is a 234-residue protein sequence, read N- to C-terminus: Sugar fermentation stimulation protein A (234 aa).

Residues 201–220 (LLSEAQNKGVEVLAYKAELS) constitute a DNA-binding region (H-T-H motif).

Belongs to the SfsA family.

Its function is as follows. Binds to DNA non-specifically. Could be a regulatory factor involved in maltose metabolism. The polypeptide is Sugar fermentation stimulation protein A (Salmonella typhi).